A 368-amino-acid chain; its full sequence is Isopentenyl-diphosphate delta-isomerase (368 aa).

Arg7–Lys8 contacts substrate. FMN contacts are provided by residues Thr65, Gly66–Thr68, Ser96, and Asn125. Ser96–Arg98 provides a ligand contact to substrate. Gln160 provides a ligand contact to substrate. Residue Glu161 participates in Mg(2+) binding. FMN is bound by residues Lys193, Ser218, Thr223, Gly275 to Arg277, and Ala296 to Leu297.

It belongs to the IPP isomerase type 2 family. In terms of assembly, homooctamer. Dimer of tetramers. It depends on FMN as a cofactor. NADPH is required as a cofactor. Mg(2+) serves as cofactor.

It localises to the cytoplasm. It catalyses the reaction isopentenyl diphosphate = dimethylallyl diphosphate. Involved in the biosynthesis of isoprenoids. Catalyzes the 1,3-allylic rearrangement of the homoallylic substrate isopentenyl (IPP) to its allylic isomer, dimethylallyl diphosphate (DMAPP). This is Isopentenyl-diphosphate delta-isomerase from Saccharolobus islandicus (strain M.16.27) (Sulfolobus islandicus).